The primary structure comprises 95 residues: Citrate lyase acyl carrier protein (95 aa).

At Ser14 the chain carries O-(phosphoribosyl dephospho-coenzyme A)serine.

This sequence belongs to the CitD family. Oligomer with a subunit composition of (alpha,beta,gamma)6.

Its subcellular location is the cytoplasm. Covalent carrier of the coenzyme of citrate lyase. The polypeptide is Citrate lyase acyl carrier protein (Haemophilus influenzae (strain ATCC 51907 / DSM 11121 / KW20 / Rd)).